A 462-amino-acid chain; its full sequence is Dipeptidyl peptidase 1 (462 aa).

The first 24 residues, 1–24 (MGPWTHSLRAALLLVLLGVCTVSS), serve as a signal peptide directing secretion. N-linked (GlcNAc...) asparagine glycans are attached at residues N29 and N53. Intrachain disulfides connect C30–C118 and C54–C136. Residues 135 to 229 (ACFVGKKMAN…TDEIQQQILS (95 aa)) constitute a propeptide that is removed on maturation. A glycan (N-linked (GlcNAc...) asparagine) is linked at N144. Cystine bridges form between C254-C297, C290-C330, and C320-C336. C257 is an active-site residue. An N-linked (GlcNAc...) asparagine glycan is attached at N275. Chloride-binding residues include F301 and Y303. Residue Y346 participates in chloride binding. Active-site residues include H404 and N426.

The protein belongs to the peptidase C1 family. As to quaternary structure, tetramer of heterotrimers consisting of exclusion domain, heavy- and light chains. The cofactor is chloride. Broadly distributed, but higher levels found in liver, spleen, intestine, lung and kidney.

The protein resides in the lysosome. The catalysed reaction is Release of an N-terminal dipeptide, Xaa-Yaa-|-Zaa-, except when Xaa is Arg or Lys, or Yaa or Zaa is Pro.. Functionally, thiol protease. Has dipeptidylpeptidase activity. Active against a broad range of dipeptide substrates composed of both polar and hydrophobic amino acids. Proline cannot occupy the P1 position and arginine cannot occupy the P2 position of the substrate. Can act as both an exopeptidase and endopeptidase. Activates serine proteases such as elastase, cathepsin G and granzymes A and B. This Rattus norvegicus (Rat) protein is Dipeptidyl peptidase 1 (Ctsc).